The sequence spans 158 residues: S-ribosylhomocysteine lyase (158 aa).

Residues histidine 54, histidine 58, and cysteine 125 each coordinate Fe cation.

The protein belongs to the LuxS family. Homodimer. Fe cation serves as cofactor.

The enzyme catalyses S-(5-deoxy-D-ribos-5-yl)-L-homocysteine = (S)-4,5-dihydroxypentane-2,3-dione + L-homocysteine. Its function is as follows. Involved in the synthesis of autoinducer 2 (AI-2) which is secreted by bacteria and is used to communicate both the cell density and the metabolic potential of the environment. The regulation of gene expression in response to changes in cell density is called quorum sensing. Catalyzes the transformation of S-ribosylhomocysteine (RHC) to homocysteine (HC) and 4,5-dihydroxy-2,3-pentadione (DPD). The chain is S-ribosylhomocysteine lyase from Lactococcus lactis subsp. cremoris (strain MG1363).